Here is a 362-residue protein sequence, read N- to C-terminus: Phosphoserine aminotransferase (362 aa).

Residue arginine 43 participates in L-glutamate binding. Pyridoxal 5'-phosphate is bound by residues 77–78 (AT), tryptophan 103, threonine 153, aspartate 173, and glutamine 196. Lysine 197 bears the N6-(pyridoxal phosphate)lysine mark. Residue 238–239 (NT) participates in pyridoxal 5'-phosphate binding.

It belongs to the class-V pyridoxal-phosphate-dependent aminotransferase family. SerC subfamily. As to quaternary structure, homodimer. Pyridoxal 5'-phosphate is required as a cofactor.

It localises to the cytoplasm. The enzyme catalyses O-phospho-L-serine + 2-oxoglutarate = 3-phosphooxypyruvate + L-glutamate. It catalyses the reaction 4-(phosphooxy)-L-threonine + 2-oxoglutarate = (R)-3-hydroxy-2-oxo-4-phosphooxybutanoate + L-glutamate. Its pathway is amino-acid biosynthesis; L-serine biosynthesis; L-serine from 3-phospho-D-glycerate: step 2/3. It participates in cofactor biosynthesis; pyridoxine 5'-phosphate biosynthesis; pyridoxine 5'-phosphate from D-erythrose 4-phosphate: step 3/5. Its function is as follows. Catalyzes the reversible conversion of 3-phosphohydroxypyruvate to phosphoserine and of 3-hydroxy-2-oxo-4-phosphonooxybutanoate to phosphohydroxythreonine. In Acidithiobacillus ferrooxidans (strain ATCC 23270 / DSM 14882 / CIP 104768 / NCIMB 8455) (Ferrobacillus ferrooxidans (strain ATCC 23270)), this protein is Phosphoserine aminotransferase.